The chain runs to 117 residues: Small ribosomal subunit protein eS25 (117 aa).

Positions 1-38 (MPPKKDAKSSAKQPQKTQKKKEGSGGGKAKKKKWSKGK) are disordered. Residues 28–37 (KAKKKKWSKG) are compositionally biased toward basic residues.

It belongs to the eukaryotic ribosomal protein eS25 family.

The sequence is that of Small ribosomal subunit protein eS25 (RpS25) from Drosophila melanogaster (Fruit fly).